Consider the following 534-residue polypeptide: CTP synthase (534 aa).

Positions 1 to 267 (MTKYIFVTGG…DQIVCDHLKL (267 aa)) are amidoligase domain. Position 13 (S13) interacts with CTP. S13 contacts UTP. 14–19 (SIGKGI) is a binding site for ATP. Residue Y54 participates in L-glutamine binding. D71 is a binding site for ATP. Residues D71 and E141 each contribute to the Mg(2+) site. Residues 148–150 (DIE), 188–193 (KTKPTQ), and K224 contribute to the CTP site. UTP contacts are provided by residues 188-193 (KTKPTQ) and K224. Residues 292–534 (KIALVGKYVE…FVTAAVENAK (243 aa)) enclose the Glutamine amidotransferase type-1 domain. G354 contributes to the L-glutamine binding site. Catalysis depends on C381, which acts as the Nucleophile; for glutamine hydrolysis. L-glutamine contacts are provided by residues 382 to 385 (LGMQ), E405, and R463. Catalysis depends on residues H508 and E510.

This sequence belongs to the CTP synthase family. As to quaternary structure, homotetramer.

The catalysed reaction is UTP + L-glutamine + ATP + H2O = CTP + L-glutamate + ADP + phosphate + 2 H(+). The enzyme catalyses L-glutamine + H2O = L-glutamate + NH4(+). It carries out the reaction UTP + NH4(+) + ATP = CTP + ADP + phosphate + 2 H(+). It functions in the pathway pyrimidine metabolism; CTP biosynthesis via de novo pathway; CTP from UDP: step 2/2. Its activity is regulated as follows. Allosterically activated by GTP, when glutamine is the substrate; GTP has no effect on the reaction when ammonia is the substrate. The allosteric effector GTP functions by stabilizing the protein conformation that binds the tetrahedral intermediate(s) formed during glutamine hydrolysis. Inhibited by the product CTP, via allosteric rather than competitive inhibition. Functionally, catalyzes the ATP-dependent amination of UTP to CTP with either L-glutamine or ammonia as the source of nitrogen. Regulates intracellular CTP levels through interactions with the four ribonucleotide triphosphates. This chain is CTP synthase, found in Streptococcus thermophilus (strain CNRZ 1066).